The primary structure comprises 125 residues: Immunoglobulin heavy variable 4-39 (125 aa).

An N-terminal signal peptide occupies residues 1-26; the sequence is MDLMCKKMKHLWFFLLLVAAPRWVLS. Positions 27–51 are framework-1; it reads QLQLQESGPGLVKPSETLSLTCTVS. The Ig-like domain maps to 27–125; that stretch reads QLQLQESGPG…ADTAVYYCAR (99 aa). Cysteine 48 and cysteine 123 are oxidised to a cystine. Residues 52–61 are complementarity-determining-1; it reads GGSISSSSYY. Residues 62–78 are framework-2; that stretch reads WGWIRQPPGKGLEWIGS. The complementarity-determining-2 stretch occupies residues 79-85; that stretch reads IYYSGST. A framework-3 region spans residues 86–123; sequence YYNPSLKSRVTISVDTSKNQFSLKLSSVTAADTAVYYC. A complementarity-determining-3 region spans residues 124–125; it reads AR.

As to quaternary structure, immunoglobulins are composed of two identical heavy chains and two identical light chains; disulfide-linked.

Its subcellular location is the secreted. It is found in the cell membrane. Its function is as follows. V region of the variable domain of immunoglobulin heavy chains that participates in the antigen recognition. Immunoglobulins, also known as antibodies, are membrane-bound or secreted glycoproteins produced by B lymphocytes. In the recognition phase of humoral immunity, the membrane-bound immunoglobulins serve as receptors which, upon binding of a specific antigen, trigger the clonal expansion and differentiation of B lymphocytes into immunoglobulins-secreting plasma cells. Secreted immunoglobulins mediate the effector phase of humoral immunity, which results in the elimination of bound antigens. The antigen binding site is formed by the variable domain of one heavy chain, together with that of its associated light chain. Thus, each immunoglobulin has two antigen binding sites with remarkable affinity for a particular antigen. The variable domains are assembled by a process called V-(D)-J rearrangement and can then be subjected to somatic hypermutations which, after exposure to antigen and selection, allow affinity maturation for a particular antigen. The protein is Immunoglobulin heavy variable 4-39 of Homo sapiens (Human).